The following is a 121-amino-acid chain: Holo-[acyl-carrier-protein] synthase (121 aa).

D8 and E58 together coordinate Mg(2+).

This sequence belongs to the P-Pant transferase superfamily. AcpS family. Mg(2+) serves as cofactor.

Its subcellular location is the cytoplasm. It carries out the reaction apo-[ACP] + CoA = holo-[ACP] + adenosine 3',5'-bisphosphate + H(+). Transfers the 4'-phosphopantetheine moiety from coenzyme A to a Ser of acyl-carrier-protein. The sequence is that of Holo-[acyl-carrier-protein] synthase from Bacillus pumilus (strain SAFR-032).